The sequence spans 546 residues: Glutamyl-tRNA(Gln) amidotransferase subunit A, chloroplastic/mitochondrial (546 aa).

A disordered region spans residues 21 to 52 (KRRRFHSSTPLFLSQPQTLASTDPPSSPPQSQ). Positions 27-43 (SSTPLFLSQPQTLASTD) are enriched in polar residues. Catalysis depends on charge relay system residues K123 and S198. Residue S222 is the Acyl-ester intermediate of the active site.

The protein belongs to the amidase family. GatA subfamily. Subunit of the heterotrimeric GatCAB amidotransferase (AdT) complex, composed of A, B and C subunits.

It localises to the mitochondrion. It is found in the plastid. The protein localises to the chloroplast stroma. It catalyses the reaction L-glutamyl-tRNA(Gln) + L-glutamine + ATP + H2O = L-glutaminyl-tRNA(Gln) + L-glutamate + ADP + phosphate + H(+). Functionally, allows the formation of correctly charged Gln-tRNA(Gln) through the transamidation of misacylated Glu-tRNA(Gln) in chloroplasts and mitochondria. The reaction takes place in the presence of glutamine and ATP through an activated gamma-phospho-Glu-tRNA(Gln). The protein is Glutamyl-tRNA(Gln) amidotransferase subunit A, chloroplastic/mitochondrial of Vitis vinifera (Grape).